The chain runs to 55 residues: MAKPTTIKIRLNSSAGTGHFYVTKKNARTMTEKMVIKKYDPVARKHVEYKEGKIK.

The protein belongs to the bacterial ribosomal protein bL33 family.

This Roseobacter denitrificans (strain ATCC 33942 / OCh 114) (Erythrobacter sp. (strain OCh 114)) protein is Large ribosomal subunit protein bL33.